The sequence spans 157 residues: Peptide methionine sulfoxide reductase MsrA (157 aa).

Residue Cys13 is part of the active site.

Belongs to the MsrA Met sulfoxide reductase family.

The enzyme catalyses L-methionyl-[protein] + [thioredoxin]-disulfide + H2O = L-methionyl-(S)-S-oxide-[protein] + [thioredoxin]-dithiol. It carries out the reaction [thioredoxin]-disulfide + L-methionine + H2O = L-methionine (S)-S-oxide + [thioredoxin]-dithiol. In terms of biological role, has an important function as a repair enzyme for proteins that have been inactivated by oxidation. Catalyzes the reversible oxidation-reduction of methionine sulfoxide in proteins to methionine. This chain is Peptide methionine sulfoxide reductase MsrA, found in Methanococcus maripaludis (strain C7 / ATCC BAA-1331).